The primary structure comprises 288 residues: Sulfur carrier protein FdhD (288 aa).

The active-site Cysteine persulfide intermediate is the C122. 268–273 lines the Mo-bis(molybdopterin guanine dinucleotide) pocket; it reads FVRGER.

This sequence belongs to the FdhD family.

It is found in the cytoplasm. Functionally, required for formate dehydrogenase (FDH) activity. Acts as a sulfur carrier protein that transfers sulfur from IscS to the molybdenum cofactor prior to its insertion into FDH. In Anaeromyxobacter sp. (strain K), this protein is Sulfur carrier protein FdhD.